The sequence spans 148 residues: Large ribosomal subunit protein bL9 (148 aa).

It belongs to the bacterial ribosomal protein bL9 family.

Binds to the 23S rRNA. In Acidithiobacillus ferrooxidans (strain ATCC 23270 / DSM 14882 / CIP 104768 / NCIMB 8455) (Ferrobacillus ferrooxidans (strain ATCC 23270)), this protein is Large ribosomal subunit protein bL9.